The primary structure comprises 254 residues: Probable pectate lyase E (254 aa).

The first 17 residues, 1–17 (MYQPLLLLPLLLTSAFA), serve as a signal peptide directing secretion. The N-linked (GlcNAc...) asparagine glycan is linked to Asn175. Residues 227–254 (TDNNDKEPKKKGSGPSNACKYKEPLSKC) form a disordered region.

The protein belongs to the polysaccharide lyase 3 family. It depends on Ca(2+) as a cofactor.

It localises to the secreted. The enzyme catalyses Eliminative cleavage of (1-&gt;4)-alpha-D-galacturonan to give oligosaccharides with 4-deoxy-alpha-D-galact-4-enuronosyl groups at their non-reducing ends.. Pectinolytic enzyme consist of four classes of enzymes: pectin lyase, polygalacturonase, pectin methylesterase and rhamnogalacturonase. Among pectinolytic enzymes, pectin lyase is the most important in depolymerization of pectin, since it cleaves internal glycosidic bonds of highly methylated pectins. Favors pectate, the anion, over pectin, the methyl ester. This Neosartorya fischeri (strain ATCC 1020 / DSM 3700 / CBS 544.65 / FGSC A1164 / JCM 1740 / NRRL 181 / WB 181) (Aspergillus fischerianus) protein is Probable pectate lyase E (plyE).